The following is a 128-amino-acid chain: NADPH-dependent 7-cyano-7-deazaguanine reductase (128 aa).

Catalysis depends on Cys-34, which acts as the Thioimide intermediate. Residue Asp-41 is the Proton donor of the active site. Substrate contacts are provided by residues 56 to 58 (IEL) and 75 to 76 (HE).

It belongs to the GTP cyclohydrolase I family. QueF type 1 subfamily.

The protein localises to the cytoplasm. The enzyme catalyses 7-aminomethyl-7-carbaguanine + 2 NADP(+) = 7-cyano-7-deazaguanine + 2 NADPH + 3 H(+). The protein operates within tRNA modification; tRNA-queuosine biosynthesis. Its function is as follows. Catalyzes the NADPH-dependent reduction of 7-cyano-7-deazaguanine (preQ0) to 7-aminomethyl-7-deazaguanine (preQ1). The polypeptide is NADPH-dependent 7-cyano-7-deazaguanine reductase (Ruthia magnifica subsp. Calyptogena magnifica).